The chain runs to 150 residues: FAD synthase (150 aa).

Residues 11–12 (TF), 16–19 (HPGH), aspartate 96, and tyrosine 124 each bind ATP.

The protein belongs to the archaeal FAD synthase family. Homodimer. A divalent metal cation serves as cofactor.

It carries out the reaction FMN + ATP + H(+) = FAD + diphosphate. The protein operates within cofactor biosynthesis; FAD biosynthesis; FAD from FMN: step 1/1. Catalyzes the transfer of the AMP portion of ATP to flavin mononucleotide (FMN) to produce flavin adenine dinucleotide (FAD) coenzyme. The protein is FAD synthase of Methanococcus maripaludis (strain C5 / ATCC BAA-1333).